The chain runs to 189 residues: Movement protein (189 aa).

It belongs to the tombusvirus/aureusvirus movement protein p22 family.

The protein localises to the host membrane. Transports viral genome to neighboring plant cells directly through plasmosdesmata, without any budding. The movement protein allows efficient cell to cell propagation, by bypassing the host cell wall barrier. This Cymbidium ringspot virus (CymRSV) protein is Movement protein.